The following is a 175-amino-acid chain: Ribosome maturation factor RimM (175 aa).

The 74-residue stretch at 99-172 folds into the PRC barrel domain; sequence ADEYHVSDLI…RLEVDAPPGL (74 aa).

The protein belongs to the RimM family. As to quaternary structure, binds ribosomal protein uS19.

The protein localises to the cytoplasm. Its function is as follows. An accessory protein needed during the final step in the assembly of 30S ribosomal subunit, possibly for assembly of the head region. Essential for efficient processing of 16S rRNA. May be needed both before and after RbfA during the maturation of 16S rRNA. It has affinity for free ribosomal 30S subunits but not for 70S ribosomes. The chain is Ribosome maturation factor RimM from Picosynechococcus sp. (strain ATCC 27264 / PCC 7002 / PR-6) (Agmenellum quadruplicatum).